A 147-amino-acid polypeptide reads, in one-letter code: Lysozyme C-3 (147 aa).

The first 18 residues, 1–18 (MKALVILGLLFLSVAVQG), serve as a signal peptide directing secretion. The region spanning 19–147 (KVFERCELAR…VSSYVEGCKL (129 aa)) is the C-type lysozyme domain. Intrachain disulfides connect C24-C145, C48-C133, C83-C99, and C95-C113. Active-site residues include E53 and D71.

This sequence belongs to the glycosyl hydrolase 22 family. As to quaternary structure, monomer. As to expression, expressed in stomach.

It localises to the secreted. It catalyses the reaction Hydrolysis of (1-&gt;4)-beta-linkages between N-acetylmuramic acid and N-acetyl-D-glucosamine residues in a peptidoglycan and between N-acetyl-D-glucosamine residues in chitodextrins.. Lysozymes have primarily a bacteriolytic function; those in tissues and body fluids are associated with the monocyte-macrophage system and enhance the activity of immunoagents. The chain is Lysozyme C-3 from Ovis aries (Sheep).